A 404-amino-acid polypeptide reads, in one-letter code: Probable tRNA sulfurtransferase (404 aa).

Residues 60-165 (TAVAESLKQV…EEAAYLSYET (106 aa)) form the THUMP domain. ATP contacts are provided by residues 183–184 (ML), 208–209 (HF), Arg265, Gly287, and Gln296.

It belongs to the ThiI family.

The protein resides in the cytoplasm. The catalysed reaction is [ThiI sulfur-carrier protein]-S-sulfanyl-L-cysteine + a uridine in tRNA + 2 reduced [2Fe-2S]-[ferredoxin] + ATP + H(+) = [ThiI sulfur-carrier protein]-L-cysteine + a 4-thiouridine in tRNA + 2 oxidized [2Fe-2S]-[ferredoxin] + AMP + diphosphate. The enzyme catalyses [ThiS sulfur-carrier protein]-C-terminal Gly-Gly-AMP + S-sulfanyl-L-cysteinyl-[cysteine desulfurase] + AH2 = [ThiS sulfur-carrier protein]-C-terminal-Gly-aminoethanethioate + L-cysteinyl-[cysteine desulfurase] + A + AMP + 2 H(+). The protein operates within cofactor biosynthesis; thiamine diphosphate biosynthesis. In terms of biological role, catalyzes the ATP-dependent transfer of a sulfur to tRNA to produce 4-thiouridine in position 8 of tRNAs, which functions as a near-UV photosensor. Also catalyzes the transfer of sulfur to the sulfur carrier protein ThiS, forming ThiS-thiocarboxylate. This is a step in the synthesis of thiazole, in the thiamine biosynthesis pathway. The sulfur is donated as persulfide by IscS. This is Probable tRNA sulfurtransferase from Streptococcus pneumoniae (strain 70585).